The following is a 1331-amino-acid chain: Serine/threonine-protein kinase SSK22 (1331 aa).

Residues 1034 to 1310 (WQKRSFIGGG…AVELLIDPWM (277 aa)) form the Protein kinase domain. ATP-binding positions include 1040–1048 (IGGGTFGQV) and K1063. D1158 functions as the Proton acceptor in the catalytic mechanism.

This sequence belongs to the protein kinase superfamily. STE Ser/Thr protein kinase family. MAP kinase kinase kinase subfamily. As to quaternary structure, interacts with by SSK1.

It catalyses the reaction L-seryl-[protein] + ATP = O-phospho-L-seryl-[protein] + ADP + H(+). It carries out the reaction L-threonyl-[protein] + ATP = O-phospho-L-threonyl-[protein] + ADP + H(+). In terms of biological role, kinase involved in a signal transduction pathway that is activated by changes in the osmolarity of the extracellular environment. Activates the PBS2 MAP kinase kinase by phosphorylation. This Saccharomyces cerevisiae (strain ATCC 204508 / S288c) (Baker's yeast) protein is Serine/threonine-protein kinase SSK22 (SSK22).